Consider the following 228-residue polypeptide: Putative N-acetylmannosamine-6-phosphate 2-epimerase (228 aa).

This sequence belongs to the NanE family.

The catalysed reaction is an N-acyl-D-glucosamine 6-phosphate = an N-acyl-D-mannosamine 6-phosphate. The protein operates within amino-sugar metabolism; N-acetylneuraminate degradation; D-fructose 6-phosphate from N-acetylneuraminate: step 3/5. Converts N-acetylmannosamine-6-phosphate (ManNAc-6-P) to N-acetylglucosamine-6-phosphate (GlcNAc-6-P). The protein is Putative N-acetylmannosamine-6-phosphate 2-epimerase of Thermosynechococcus vestitus (strain NIES-2133 / IAM M-273 / BP-1).